Here is a 91-residue protein sequence, read N- to C-terminus: Small ribosomal subunit protein uS19 (91 aa).

The protein belongs to the universal ribosomal protein uS19 family.

Protein S19 forms a complex with S13 that binds strongly to the 16S ribosomal RNA. The chain is Small ribosomal subunit protein uS19 from Prochlorococcus marinus (strain MIT 9303).